The following is a 700-amino-acid chain: ATP-dependent zinc metalloprotease FtsH (700 aa).

Topologically, residues 1 to 20 are cytoplasmic; it reads MSSDNGSGRQGGDRGGSTGY. The chain crosses the membrane as a helical span at residues 21–41; the sequence is NLLMYLGFGAIIATLVALYVL. Residues 42–171 lie on the Periplasmic side of the membrane; it reads QMFQTSLDYT…FRHADPPGPW (130 aa). Residues 172–192 form a helical membrane-spanning segment; it reads EQHSQLIIGMLLAAMLIYIVV. Over 193–700 the chain is Cytoplasmic; that stretch reads RRLSAAGSPM…ITAPATERSG (508 aa). Residue 262–269 coordinates ATP; sequence GPPGTGKT. H484 provides a ligand contact to Zn(2+). E485 is an active-site residue. Zn(2+) contacts are provided by H488 and D561.

In the central section; belongs to the AAA ATPase family. It in the C-terminal section; belongs to the peptidase M41 family. In terms of assembly, homohexamer. Requires Zn(2+) as cofactor.

It localises to the cell inner membrane. Acts as a processive, ATP-dependent zinc metallopeptidase for both cytoplasmic and membrane proteins. Plays a role in the quality control of integral membrane proteins. In Pirellula staleyi (strain ATCC 27377 / DSM 6068 / ICPB 4128) (Pirella staleyi), this protein is ATP-dependent zinc metalloprotease FtsH.